The following is a 567-amino-acid chain: Laccase-3 (567 aa).

The first 24 residues, 1–24 (MASSSSSRLLFLLSCSVLALLAGA), serve as a signal peptide directing secretion. Plastocyanin-like domains follow at residues 32-148 (IVQE…PREN) and 158-310 (REVP…YDCG). An N-linked (GlcNAc...) asparagine glycan is attached at asparagine 78. Cu cation is bound by residues histidine 82, histidine 84, histidine 127, and histidine 129. Asparagine 148, asparagine 187, asparagine 203, asparagine 298, asparagine 330, asparagine 379, and asparagine 389 each carry an N-linked (GlcNAc...) asparagine glycan. Residues 415 to 551 (DFPAYPPVQF…AMAFLVEDGY (137 aa)) enclose the Plastocyanin-like 3 domain. Cu cation-binding residues include histidine 468, histidine 471, histidine 473, histidine 530, cysteine 531, histidine 532, and histidine 536.

The protein belongs to the multicopper oxidase family. The cofactor is Cu cation.

Its subcellular location is the secreted. It is found in the extracellular space. The protein resides in the apoplast. It catalyses the reaction 4 hydroquinone + O2 = 4 benzosemiquinone + 2 H2O. In terms of biological role, lignin degradation and detoxification of lignin-derived products. The protein is Laccase-3 (LAC3) of Oryza sativa subsp. japonica (Rice).